A 291-amino-acid polypeptide reads, in one-letter code: Insulin-like growth factor-binding protein 3 (291 aa).

Residues 1-27 form the signal peptide; it reads MLRARPALWAAALTALTLLRGPPAARA. Positions 28–134 are IGF-binding; sequence GAGTMGAGPV…LRPYLLPSAS (107 aa). The IGFBP N-terminal domain occupies 36–119; the sequence is PVVRCEPCDA…LDGRGLCANA (84 aa). Disulfide bonds link C40-C69, C43-C71, C51-C72, C60-C75, C83-C96, and C90-C116. N-linked (GlcNAc...) asparagine glycosylation is found at N118 and N136. Disordered stretches follow at residues 132 to 162 and 177 to 211; these read SASG…RVPV and KGHA…TEYG. The span at 146–155 shows a compositional bias: polar residues; the sequence is MGSTENQAGP. Phosphoserine is present on S148. Over residues 177 to 190 the composition is skewed to basic and acidic residues; it reads KGHAKDSQRYKVDY. Positions 191–202 are enriched in polar residues; it reads ESQSTDTQNFSS. N-linked (GlcNAc...) asparagine glycosylation occurs at N199. S201 bears the Phosphoserine mark. Residues 210-285 enclose the Thyroglobulin type-1 domain; sequence YGPCRREMED…DVKGKGDVHC (76 aa). Cystine bridges form between C213/C240, C251/C262, and C264/C285.

Interacts with XLKD1. Binds IGF2 more than IGF1. Forms a ternary complex of about 140 to 150 kDa with IGF1 or IGF2 and a 85 kDa glycoprotein (ALS). Interacts with humanin; humanin competes with importin KPNB1 for binding to IGFBP3, blocking IGFBP3 nuclear import and IGFBP3-mediated apoptosis. Interacts with TMEM219. Interacts with RXRA; this interaction modulates the transcriptional activity of RXRA. Interacts with LRP1; this interaction mediates cell growth inhibition independent of IGF1. Post-translationally, phosphorylated by FAM20C in the extracellular medium. Phosphorylated by CK2; resulting in decreased nuclear localization. Plasma; expressed by most tissues.

It is found in the secreted. The protein localises to the nucleus. Functionally, multifunctional protein that plays a critical role in regulating the availability of IGFs such as IGF1 and IGF2 to their receptors and thereby regulates IGF-mediated cellular processes including proliferation, differentiation, and apoptosis in a cell-type specific manner. Also exhibits IGF-independent antiproliferative and apoptotic effects mediated by its receptor TMEM219/IGFBP-3R. Inhibits the positive effect of humanin on insulin sensitivity. Promotes testicular germ cell apoptosis. Acts via LRP-1/alpha2M receptor, also known as TGF-beta type V receptor, to mediate cell growth inhibition independent of IGF1. Mechanistically, induces serine-specific dephosphorylation of IRS1 or IRS2 upon ligation to its receptor, leading to the inhibitory cascade. In the nucleus, interacts with transcription factors such as retinoid X receptor-alpha/RXRA to regulate transcriptional signaling and apoptosis. This Bos taurus (Bovine) protein is Insulin-like growth factor-binding protein 3 (IGFBP3).